Here is a 325-residue protein sequence, read N- to C-terminus: Pyruvate dehydrogenase E1 component subunit beta (325 aa).

Position 60 (Glu-60) interacts with thiamine diphosphate.

Heterodimer of an alpha and a beta chain. Thiamine diphosphate is required as a cofactor.

It catalyses the reaction N(6)-[(R)-lipoyl]-L-lysyl-[protein] + pyruvate + H(+) = N(6)-[(R)-S(8)-acetyldihydrolipoyl]-L-lysyl-[protein] + CO2. In terms of biological role, the pyruvate dehydrogenase complex catalyzes the overall conversion of pyruvate to acetyl-CoA and CO(2). It contains multiple copies of three enzymatic components: pyruvate dehydrogenase (E1), dihydrolipoamide acetyltransferase (E2) and lipoamide dehydrogenase (E3). The chain is Pyruvate dehydrogenase E1 component subunit beta (pdhB) from Staphylococcus aureus (strain COL).